Reading from the N-terminus, the 179-residue chain is Peptide deformylase (179 aa).

Residues C103 and H145 each contribute to the Fe cation site. E146 is a catalytic residue. Fe cation is bound at residue H149.

This sequence belongs to the polypeptide deformylase family. Fe(2+) is required as a cofactor.

It carries out the reaction N-terminal N-formyl-L-methionyl-[peptide] + H2O = N-terminal L-methionyl-[peptide] + formate. Removes the formyl group from the N-terminal Met of newly synthesized proteins. Requires at least a dipeptide for an efficient rate of reaction. N-terminal L-methionine is a prerequisite for activity but the enzyme has broad specificity at other positions. The polypeptide is Peptide deformylase (Leptospira biflexa serovar Patoc (strain Patoc 1 / Ames)).